The primary structure comprises 622 residues: uncharacterized protein (622 aa).

The segment covering 157 to 166 has biased composition (basic and acidic residues); the sequence is LKESPLRDQQ. A disordered region spans residues 157–238; sequence LKESPLRDQQ…GLPDHNSISE (82 aa).

This is an uncharacterized protein from Homo sapiens (Human).